A 387-amino-acid chain; its full sequence is Deoxyhypusine synthase (387 aa).

NAD(+)-binding positions include 108–112, 134–136, E140, and D257; these read SNLIS and SAG. 139–140 is a binding site for spermidine; that stretch reads EE. Residue D262 coordinates spermidine. G304 is a binding site for NAD(+). Residue H309 coordinates spermidine. 329–330 provides a ligand contact to NAD(+); the sequence is TG. Spermidine contacts are provided by residues 335–337 and 344–350; these read GSD and EAVSWGK. K350 acts as the Nucleophile in catalysis. Residue 363 to 364 coordinates NAD(+); that stretch reads DV.

It belongs to the deoxyhypusine synthase family. Homotetramer. NAD(+) is required as a cofactor.

The catalysed reaction is [eIF5A protein]-L-lysine + spermidine = [eIF5A protein]-deoxyhypusine + propane-1,3-diamine. Its pathway is protein modification; eIF5A hypusination. Its function is as follows. Catalyzes the NAD-dependent oxidative cleavage of spermidine and the subsequent transfer of the butylamine moiety of spermidine to the epsilon-amino group of a specific lysine residue of the eIF-5A precursor protein to form the intermediate deoxyhypusine residue. The protein is Deoxyhypusine synthase of Saccharomyces cerevisiae (strain ATCC 204508 / S288c) (Baker's yeast).